Reading from the N-terminus, the 259-residue chain is Aspartate/glutamate leucyltransferase (259 aa).

The protein belongs to the R-transferase family. Bpt subfamily.

It localises to the cytoplasm. It catalyses the reaction N-terminal L-glutamyl-[protein] + L-leucyl-tRNA(Leu) = N-terminal L-leucyl-L-glutamyl-[protein] + tRNA(Leu) + H(+). The enzyme catalyses N-terminal L-aspartyl-[protein] + L-leucyl-tRNA(Leu) = N-terminal L-leucyl-L-aspartyl-[protein] + tRNA(Leu) + H(+). Functions in the N-end rule pathway of protein degradation where it conjugates Leu from its aminoacyl-tRNA to the N-termini of proteins containing an N-terminal aspartate or glutamate. The sequence is that of Aspartate/glutamate leucyltransferase from Sinorhizobium medicae (strain WSM419) (Ensifer medicae).